A 72-amino-acid polypeptide reads, in one-letter code: Large ribosomal subunit protein bL28 (72 aa).

It belongs to the bacterial ribosomal protein bL28 family.

In Chlorobaculum parvum (strain DSM 263 / NCIMB 8327) (Chlorobium vibrioforme subsp. thiosulfatophilum), this protein is Large ribosomal subunit protein bL28.